We begin with the raw amino-acid sequence, 531 residues long: MSAKEKFTSISPAEFFKRNPELAGFSNPARAMYQALRELVENALDATDVHEILPSIKVIIERTSQEKEIYRLTVEDNGIGIPPHVVPDAFGRVLYSSKYVLRQTRGMYGLGVKAAVLYSQMYQDKPIEITTAPLNSKRIYSFKLKIDVTKNEPIIYERGSVNNDTGYHGTSVSMYILGDWMRAKSRVYEYIKRTYIITPYAEFYFKDPEGNVVLYPRLTNKMPVPPKEVKPHPYGVDIELLKNMISRQKEDTTVKEFLVKEFQSVGEKTALSVIEMAGLDPDKRVQKLTDDQLSKLVDAMKNFPDFRPPSPEALSTIGADLIELGLKQTFNPEYVGAVTRRPKAYQGHPFIVEVGLAYGGDIQPSEEPTVLRYANKIPLIYDEKSDVVWKVVEEIDWKRYGIEDEQLPLVVMVHLCSTKVPYKSAGKESIADVEEIEKEIRNGIMEASRSLKTFMTEKRKEEEARKRLLTYLKYIPELARSLSIFVTDGKKELAPKVQEEIQNKMIDLVVTKLNIKDKDLELFKSYRVETL.

Residues Asn42, Asp76, 97–98, 106–113, and Lys427 each bind ATP; these read SK and GMYGLGVK.

This sequence belongs to the TOP6B family. Homodimer. Heterotetramer of two Top6A and two Top6B chains.

It carries out the reaction ATP-dependent breakage, passage and rejoining of double-stranded DNA.. Functionally, relaxes both positive and negative superturns and exhibits a strong decatenase activity. This chain is Type 2 DNA topoisomerase 6 subunit B, found in Metallosphaera sedula (strain ATCC 51363 / DSM 5348 / JCM 9185 / NBRC 15509 / TH2).